A 1117-amino-acid polypeptide reads, in one-letter code: Protein ECM21 (1117 aa).

Disordered regions lie at residues 1-48 (MPFI…RRSS) and 63-155 (VHSP…YSQI). Over residues 11–34 (KNSSHSLSETDLNQSKGQPFQPSP) the composition is skewed to polar residues. Serine 18 is modified (phosphoserine). Residues 70 to 81 (NNTTKGGNNNGN) are compositionally biased toward low complexity. At serine 115 the chain carries Phosphoserine. Residues 117-130 (SDSATTTPRSSTSD) are compositionally biased toward low complexity. The residue at position 140 (serine 140) is a Phosphoserine. Residue lysine 191 forms a Glycyl lysine isopeptide (Lys-Gly) (interchain with G-Cter in ubiquitin) linkage. Disordered regions lie at residues 275–312 (ATTA…ELNT) and 486–523 (YRQD…AQAH). Residue serine 286 is modified to Phosphoserine. The span at 501–519 (SSSSLSSTTSSLKLTETES) shows a compositional bias: low complexity. Phosphoserine is present on residues serine 527 and serine 550. Residues lysine 577, lysine 651, and lysine 712 each participate in a glycyl lysine isopeptide (Lys-Gly) (interchain with G-Cter in ubiquitin) cross-link. Residue serine 775 is modified to Phosphoserine. Glycyl lysine isopeptide (Lys-Gly) (interchain with G-Cter in ubiquitin) cross-links involve residues lysine 794, lysine 807, and lysine 1024. Disordered regions lie at residues 1016-1065 (RSRF…KDKQ) and 1079-1117 (KDDE…SDEE). Polar residues predominate over residues 1027–1059 (STPSPVNRSHNSSPTNGLSQANGTVRIPNATTE). Serine 1035 carries the post-translational modification Phosphoserine. The span at 1089–1098 (SSSSADSLLS) shows a compositional bias: low complexity.

This sequence belongs to the CSR2 family.

It localises to the cytoplasm. Functionally, may be involved in cell wall organization and biogenesis. This is Protein ECM21 (ECM21) from Saccharomyces cerevisiae (strain ATCC 204508 / S288c) (Baker's yeast).